The sequence spans 695 residues: NADPH--cytochrome P450 reductase (695 aa).

Over 1-8 the chain is Lumenal; it reads MAQLDTLD. Residues 9–31 traverse the membrane as a helical segment; the sequence is LVVLVVLLVGSAAYFTKGTYWAV. Over 32–695 the chain is Cytoplasmic; the sequence is PKDPYAASGP…SGSYQEDVWS (664 aa). The 156-residue stretch at 66-221 folds into the Flavodoxin-like domain; the sequence is CVIFYGSQTG…DFLAWKEPMW (156 aa). FMN is bound by residues 72 to 77, 123 to 126, 169 to 178, and aspartate 204; these read SQTGTA, ATYG, and LGNNTYEHYQ. The 262-residue stretch at 277 to 538 folds into the FAD-binding FR-type domain; that stretch reads HNPFIAPIVE…HVRHSNFKLP (262 aa). Arginine 296 serves as a coordination point for NADP(+). FAD contacts are provided by residues 451–454, 469–471, and 486–489; these read RYYS, TAV, and GVTT. NADP(+) is bound by residues threonine 552, 614-615, 620-624, and glutamate 656; these read SR and KVYVQ. Tryptophan 694 contributes to the FAD binding site.

It belongs to the NADPH--cytochrome P450 reductase family. This sequence in the N-terminal section; belongs to the flavodoxin family. The protein in the C-terminal section; belongs to the flavoprotein pyridine nucleotide cytochrome reductase family. FAD serves as cofactor. The cofactor is FMN.

Its subcellular location is the endoplasmic reticulum membrane. The protein localises to the mitochondrion outer membrane. The protein resides in the cell membrane. The catalysed reaction is 2 oxidized [cytochrome P450] + NADPH = 2 reduced [cytochrome P450] + NADP(+) + H(+). Its function is as follows. This enzyme is required for electron transfer from NADP to cytochrome P450 in microsomes. It can also provide electron transfer to heme oxygenase and cytochrome B5. Involved in ergosterol biosynthesis. In Aspergillus terreus (strain NIH 2624 / FGSC A1156), this protein is NADPH--cytochrome P450 reductase.